A 508-amino-acid chain; its full sequence is Rhamnogalacturonan I rhamnosyltransferase 1 (508 aa).

Residues 41–63 (LWMIRAVTVLLLWSCFVHLMALG) traverse the membrane as a helical; Signal-anchor for type II membrane protein segment. Asparagine 136, asparagine 202, and asparagine 223 each carry an N-linked (GlcNAc...) asparagine glycan. Residue 277-279 (HLR) participates in substrate binding. Residue asparagine 391 is glycosylated (N-linked (GlcNAc...) asparagine).

It belongs to the glycosyltransferase GT106 family. As to expression, highly expressed in siliques. Expressed in stems and flowers. Expressed at low levels in roots and rosette leaves.

The protein localises to the golgi apparatus membrane. It catalyses the reaction alpha-D-galacturonosyl-[(1-&gt;2)-alpha-L-rhamnosyl-(1-&gt;4)-alpha-D-galacturonosyl](n) + UDP-beta-L-rhamnose = [(1-&gt;2)-alpha-L-rhamnosyl-(1-&gt;4)-alpha-D-galacturonosyl](n+1) + UDP + H(+). It functions in the pathway glycan metabolism; pectin biosynthesis. Glycosyltransferase involved in the formation of rhamnogalacturonan I (RG-I) oligosaccharides in the seed coat mucilage, which is a specialized cell wall with abundant RG-I. Transfers the rhamnose residue from UDP-beta-L-rhamnose to RG-I oligosaccharides. Prefers RG-I oligosaccharides with a degree of polymerization of 5 or larger than 5. Does not act on oligosaccharides with a degree of polymerization of 4 or smaller than 4. Does not require metal ions for its activity. This Arabidopsis thaliana (Mouse-ear cress) protein is Rhamnogalacturonan I rhamnosyltransferase 1.